A 138-amino-acid polypeptide reads, in one-letter code: Ribosomal RNA large subunit methyltransferase H (138 aa).

S-adenosyl-L-methionine-binding positions include leucine 57, glycine 86, and 105–110 (LSPLTF).

Belongs to the RNA methyltransferase RlmH family. In terms of assembly, homodimer.

It localises to the cytoplasm. The enzyme catalyses pseudouridine(1915) in 23S rRNA + S-adenosyl-L-methionine = N(3)-methylpseudouridine(1915) in 23S rRNA + S-adenosyl-L-homocysteine + H(+). Its function is as follows. Specifically methylates the pseudouridine at position 1915 (m3Psi1915) in 23S rRNA. This chain is Ribosomal RNA large subunit methyltransferase H, found in Prochlorococcus marinus (strain MIT 9312).